Here is a 332-residue protein sequence, read N- to C-terminus: L-lactate dehydrogenase A-like 6A (332 aa).

The residue at position 2 (Ala-2) is an N-acetylalanine. Lys-5 and Lys-57 each carry N6-acetyllysine; alternate. Lys-5 is subject to N6-succinyllysine; alternate. 29-57 (GSVGVACAISILLKGLSDELVLVDVDEGK) serves as a coordination point for NAD(+). A Glycyl lysine isopeptide (Lys-Gly) (interchain with G-Cter in SUMO2); alternate cross-link involves residue Lys-57. At Lys-81 the chain carries N6-acetyllysine. Arg-99 is an NAD(+) binding site. Arg-106 contributes to the substrate binding site. Lys-118 carries the post-translational modification N6-acetyllysine; alternate. Lys-118 is subject to N6-succinyllysine; alternate. NAD(+) is bound at residue Asn-138. 2 residues coordinate substrate: Asn-138 and Arg-169. The Proton acceptor role is filled by His-193. Position 232 is an N6-acetyllysine (Lys-232). At Tyr-239 the chain carries Phosphotyrosine. Lys-243 bears the N6-acetyllysine mark. Thr-248 is a substrate binding site. Thr-309 carries the phosphothreonine modification. N6-acetyllysine; alternate is present on Lys-318. Position 318 is an N6-succinyllysine; alternate (Lys-318). Thr-322 carries the post-translational modification Phosphothreonine.

Belongs to the LDH/MDH superfamily. LDH family. As to expression, testis-specific.

It localises to the cytoplasm. It carries out the reaction (S)-lactate + NAD(+) = pyruvate + NADH + H(+). It participates in fermentation; pyruvate fermentation to lactate; (S)-lactate from pyruvate: step 1/1. Functionally, catalyzes the interconversion of L-lactate and pyruvate with nicotinamide adenine dinucleotide NAD(+) as a coenzyme. Significantly increases the transcriptional activity of JUN, when overexpressed. The sequence is that of L-lactate dehydrogenase A-like 6A (LDHAL6A) from Homo sapiens (Human).